The following is a 545-amino-acid chain: Myotubularin-related protein 9 (545 aa).

Position 1 is an N-acetylmethionine (M1). Residues 4 to 99 (AELIKTPRVD…LNIASSIEAL (96 aa)) form the GRAM domain. One can recognise a Myotubularin phosphatase domain in the interval 123–498 (GWHSFLPEQE…QSLQLWEGIF (376 aa)). Residues 508–542 (LDEAYEEMVNIIEYNKELQAKVNVLRRQLAELETE) adopt a coiled-coil conformation.

Belongs to the protein-tyrosine phosphatase family. Non-receptor class myotubularin subfamily. As to quaternary structure, homodimer. Heterodimer (via C-terminus) with lipid phosphatase MTMR6 (via C-terminus). Heterodimer (via coiled coil domain) with lipid phosphatase MTMR7 (via C-terminus).

The protein localises to the cytoplasm. It is found in the cell projection. Its subcellular location is the ruffle membrane. The protein resides in the perinuclear region. It localises to the endoplasmic reticulum. In terms of biological role, acts as an adapter for myotubularin-related phosphatases. Increases lipid phosphatase MTMR6 catalytic activity, specifically towards phosphatidylinositol 3,5-bisphosphate, and MTMR6 binding affinity for phosphorylated phosphatidylinositols. Positively regulates lipid phosphatase MTMR7 catalytic activity. The formation of the MTMR6-MTMR9 complex, stabilizes both MTMR6 and MTMR9 protein levels. Plays a role in the late stages of macropinocytosis possibly by regulating MTMR6-mediated dephosphorylation of phosphatidylinositol 3-phosphate in membrane ruffles. Negatively regulates DNA damage-induced apoptosis, in part via its association with MTMR6. Does not bind mono-, di- and tri-phosphorylated phosphatidylinositols, phosphatidic acid and phosphatidylserine. The sequence is that of Myotubularin-related protein 9 (Mtmr9) from Mus musculus (Mouse).